The primary structure comprises 158 residues: NAD(P)H-quinone oxidoreductase subunit J, chloroplastic (158 aa).

This sequence belongs to the complex I 30 kDa subunit family. As to quaternary structure, NDH is composed of at least 16 different subunits, 5 of which are encoded in the nucleus.

The protein localises to the plastid. It localises to the chloroplast thylakoid membrane. The enzyme catalyses a plastoquinone + NADH + (n+1) H(+)(in) = a plastoquinol + NAD(+) + n H(+)(out). It catalyses the reaction a plastoquinone + NADPH + (n+1) H(+)(in) = a plastoquinol + NADP(+) + n H(+)(out). Its function is as follows. NDH shuttles electrons from NAD(P)H:plastoquinone, via FMN and iron-sulfur (Fe-S) centers, to quinones in the photosynthetic chain and possibly in a chloroplast respiratory chain. The immediate electron acceptor for the enzyme in this species is believed to be plastoquinone. Couples the redox reaction to proton translocation, and thus conserves the redox energy in a proton gradient. This is NAD(P)H-quinone oxidoreductase subunit J, chloroplastic from Draba nemorosa (Woodland whitlowgrass).